The chain runs to 973 residues: Piwi-like protein 2 (973 aa).

The interval 28-65 is disordered; it reads WPQASKPLDPALGRGAPAGRGHVFGKPEEPSTQRGPAQ. Low complexity predominate over residues 34–48; that stretch reads PLDPALGRGAPAGRG. Residue R47 is modified to Symmetric dimethylarginine. R76 and R97 each carry omega-N-methylarginine; by PRMT5; alternate. Symmetric dimethylarginine; by PRMT5; alternate is present on R76. Residue R97 is modified to Symmetric dimethylarginine; alternate. The residue at position 102 (R102) is a Symmetric dimethylarginine; by PRMT5; alternate. Position 102 is an omega-N-methylarginine; alternate (R102). Residues R146 and R158 each carry the symmetric dimethylarginine modification. Positions 162 to 199 are disordered; that stretch reads GISREVDKPPCTFSTPSRGPPQLSSPPALPQSPLHSPD. R165 bears the Symmetric dimethylarginine; by PRMT5 mark. The PAZ domain maps to 389–502; it reads CVLDVMHAIY…LLPELSFMTG (114 aa). Residue R551 is modified to Symmetric dimethylarginine; by PRMT5. The 292-residue stretch at 668–959 folds into the Piwi domain; that stretch reads MVVCIIMGPR…LAFLSGHILH (292 aa). Catalysis depends on residues D745, E783, D815, and H948.

The protein belongs to the argonaute family. Piwi subfamily. Interacts with DDX4, MAEL, EIF3A, EIF4E, EIF4G, PRMT5 and WDR77. Associates with EIF4E- and EIF4G-containing m7G cap-binding complexes. Interacts (when methylated on arginine residues) with TDRD1 and TDRKH/TDRD2. Interacts with TDRD12. Component of the PET complex, at least composed of EXD1, PIWIL2, TDRD12 and piRNAs. Interacts with MOV10L1. Interacts with GPAT2. Interacts with TEX19. Interacts with GSK3B. Interacts (via PIWI domain) with BMAL1 and CLOCK. Interacts with TEX15. The cofactor is Mg(2+). In terms of processing, arginine methylation by PRMT5 is required for the interaction with Tudor domain-containing protein TDRD1 and subsequent localization to the meiotic nuage, also named P granule. As to expression, expressed in adult testis and in most tumors.

Its subcellular location is the cytoplasm. Endoribonuclease that plays a central role during spermatogenesis by repressing transposable elements and preventing their mobilization, which is essential for the germline integrity. Plays an essential role in meiotic differentiation of spermatocytes, germ cell differentiation and in self-renewal of spermatogonial stem cells. Acts via the piRNA metabolic process, which mediates the repression of transposable elements during meiosis by forming complexes composed of piRNAs and Piwi proteins and govern the methylation and subsequent repression of transposons. During piRNA biosynthesis, plays a key role in the piRNA amplification loop, also named ping-pong amplification cycle, by acting as a 'slicer-competent' piRNA endoribonuclease that cleaves primary piRNAs, which are then loaded onto 'slicer-incompetent' PIWIL4. PIWIL2 slicing produces a pre-miRNA intermediate, which is then processed in mature piRNAs, and as well as a 16 nucleotide by-product that is degraded. Required for PIWIL4/MIWI2 nuclear localization and association with secondary piRNAs antisense. Besides their function in transposable elements repression, piRNAs are probably involved in other processes during meiosis such as translation regulation. Indirectly modulates expression of genes such as PDGFRB, SLC2A1, ITGA6, GJA7, THY1, CD9 and STRA8. When overexpressed, acts as an oncogene by inhibition of apoptosis and promotion of proliferation in tumors. Represses circadian rhythms by promoting the stability and activity of core clock components BMAL1 and CLOCK by inhibiting GSK3B-mediated phosphorylation and ubiquitination-dependent degradation of these proteins. This chain is Piwi-like protein 2 (PIWIL2), found in Homo sapiens (Human).